The primary structure comprises 299 residues: tRNA dimethylallyltransferase (299 aa).

An ATP-binding site is contributed by 11–18; the sequence is GPTAVGKT. 13–18 is a substrate binding site; sequence TAVGKT. Residues 36 to 39 are interaction with substrate tRNA; that stretch reads DSQQ.

The protein belongs to the IPP transferase family. As to quaternary structure, monomer. The cofactor is Mg(2+).

It carries out the reaction adenosine(37) in tRNA + dimethylallyl diphosphate = N(6)-dimethylallyladenosine(37) in tRNA + diphosphate. In terms of biological role, catalyzes the transfer of a dimethylallyl group onto the adenine at position 37 in tRNAs that read codons beginning with uridine, leading to the formation of N6-(dimethylallyl)adenosine (i(6)A). The protein is tRNA dimethylallyltransferase of Streptococcus pyogenes serotype M4 (strain MGAS10750).